The primary structure comprises 219 residues: Cytidylate kinase (219 aa).

Residue 21-29 participates in ATP binding; the sequence is GPAASGKGT.

This sequence belongs to the cytidylate kinase family. Type 1 subfamily.

The protein localises to the cytoplasm. It carries out the reaction CMP + ATP = CDP + ADP. The catalysed reaction is dCMP + ATP = dCDP + ADP. This chain is Cytidylate kinase, found in Rickettsia rickettsii (strain Iowa).